A 430-amino-acid polypeptide reads, in one-letter code: F-box protein At1g49990 (430 aa).

One can recognise an F-box domain in the interval 1-45; sequence METGRRRTIPEVEILARLPLRSIARFKSVCKRWKSVIESDYFRRL.

This is F-box protein At1g49990 from Arabidopsis thaliana (Mouse-ear cress).